Reading from the N-terminus, the 124-residue chain is MATINQLVRKPRSMKVAKSNVPALEACPQKRGVCTRVYTTTPKKPNSALRKVCRVRLTNGFEVTSYIGGEGHNLQEHSVILIRGGRVKDLPGVRYHTVRGALDCSGVKDRKQSRSKYGVKKPKA.

Residue aspartate 89 is modified to 3-methylthioaspartic acid.

This sequence belongs to the universal ribosomal protein uS12 family. As to quaternary structure, part of the 30S ribosomal subunit. Contacts proteins S8 and S17. May interact with IF1 in the 30S initiation complex.

In terms of biological role, with S4 and S5 plays an important role in translational accuracy. Interacts with and stabilizes bases of the 16S rRNA that are involved in tRNA selection in the A site and with the mRNA backbone. Located at the interface of the 30S and 50S subunits, it traverses the body of the 30S subunit contacting proteins on the other side and probably holding the rRNA structure together. The combined cluster of proteins S8, S12 and S17 appears to hold together the shoulder and platform of the 30S subunit. The protein is Small ribosomal subunit protein uS12 of Yersinia enterocolitica serotype O:8 / biotype 1B (strain NCTC 13174 / 8081).